Here is a 912-residue protein sequence, read N- to C-terminus: Protein translocase subunit SecA (912 aa).

ATP contacts are provided by residues Gln-87, 105–109 (GEGKT), and Asp-499. Residues Cys-897, Cys-899, Cys-908, and His-909 each coordinate Zn(2+).

The protein belongs to the SecA family. As to quaternary structure, monomer and homodimer. Part of the essential Sec protein translocation apparatus which comprises SecA, SecYEG and auxiliary proteins SecDF-YajC and YidC. Requires Zn(2+) as cofactor.

The protein resides in the cell inner membrane. It is found in the cytoplasm. It carries out the reaction ATP + H2O + cellular proteinSide 1 = ADP + phosphate + cellular proteinSide 2.. Part of the Sec protein translocase complex. Interacts with the SecYEG preprotein conducting channel. Has a central role in coupling the hydrolysis of ATP to the transfer of proteins into and across the cell membrane, serving both as a receptor for the preprotein-SecB complex and as an ATP-driven molecular motor driving the stepwise translocation of polypeptide chains across the membrane. The sequence is that of Protein translocase subunit SecA from Rhizorhabdus wittichii (strain DSM 6014 / CCUG 31198 / JCM 15750 / NBRC 105917 / EY 4224 / RW1) (Sphingomonas wittichii).